The sequence spans 32 residues: Trypsin inhibitor 4 (32 aa).

3 disulfide bridges follow: C6–C23, C13–C25, and C19–C31.

It belongs to the protease inhibitor I7 (squash-type serine protease inhibitor) family.

The protein localises to the secreted. Its function is as follows. Inhibits trypsin. The protein is Trypsin inhibitor 4 of Cucurbita maxima (Pumpkin).